Reading from the N-terminus, the 287-residue chain is Proteasome assembly chaperone 1 (287 aa).

Positions 1-32 (MATFFGEVQSVFSRAVDEDDEEEEGEEEEEDR) are disordered. Over residues 17 to 32 (DEDDEEEEGEEEEEDR) the composition is skewed to acidic residues.

It belongs to the PSMG1 family. Forms a heterodimer with psmg2. Post-translationally, degraded by the proteasome upon completion of 20S proteasome maturation.

Its subcellular location is the cytoplasm. The protein resides in the endoplasmic reticulum. Functionally, chaperone protein which promotes assembly of the 20S proteasome as part of a heterodimer with psmg2. The sequence is that of Proteasome assembly chaperone 1 from Xenopus tropicalis (Western clawed frog).